A 201-amino-acid polypeptide reads, in one-letter code: Recombination protein RecR (201 aa).

Residues 60–75 form a C4-type zinc finger; sequence CKKCFNLTSEDECEIC. The Toprim domain maps to 83–177; it reads KLICVVAETK…KVTRIAYGLP (95 aa).

The protein belongs to the RecR family.

May play a role in DNA repair. It seems to be involved in an RecBC-independent recombinational process of DNA repair. It may act with RecF and RecO. This Prochlorococcus marinus (strain MIT 9215) protein is Recombination protein RecR.